Consider the following 204-residue polypeptide: Wound-induced proteinase inhibitor 2 (204 aa).

The signal sequence occupies residues 1-25 (MAVPKEVSFLASLLVLGILLLHVDA). Repeat copies occupy residues 25–67 (AKAC…DPNN), 68–125 (PKPC…DPNN), and 126–183 (PKPC…DPNH). Disulfide bonds link Cys-28–Cys-100, Cys-38–Cys-75, Cys-41–Cys-59, Cys-42–Cys-71, Cys-48–Cys-84, and Cys-99–Cys-117. The 4; truncated repeat unit spans residues 184 to 204 (PKACPKNCDPNIAYSLCLYEK).

This sequence belongs to the protease inhibitor I20 (potato type II proteinase inhibitor) family.

The chain is Wound-induced proteinase inhibitor 2 (PIN2) from Capsicum annuum (Capsicum pepper).